The chain runs to 150 residues: Cytochrome b5 type B (150 aa).

A propeptide spanning residues 1 to 15 (MSGSMATAEASGSDG) is cleaved from the precursor. The disordered stretch occupies residues 1–20 (MSGSMATAEASGSDGKGQEV). At Ser-23 the chain carries Phosphoserine. The Cytochrome b5 heme-binding domain occupies 24-100 (VTYYRLEEVA…LKQYYIGDIH (77 aa)). Lys-34 carries the post-translational modification N6-acetyllysine. Position 37 is a phosphoserine (Ser-37). At Lys-39 the chain carries N6-methyllysine. His-59 and His-83 together coordinate heme. The residue at position 84 (Ser-84) is a Phosphoserine. The helical transmembrane segment at 123 to 140 (WAYWILPIIGAVLLGFLY) threads the bilayer.

Belongs to the cytochrome b5 family. Component of a complex composed of cytochrome b5, NADH-cytochrome b5 reductase (CYB5R3) and MTARC2.

The protein resides in the mitochondrion outer membrane. Functionally, cytochrome b5 is a membrane-bound hemoprotein functioning as an electron carrier for several membrane-bound oxygenases. In Homo sapiens (Human), this protein is Cytochrome b5 type B (CYB5B).